A 330-amino-acid chain; its full sequence is uncharacterized protein (330 aa).

Residues 4-242 (LTISDLVVEY…AGEVLFEQST (239 aa)) form the ABC transporter domain. 40–47 (GPSGCGKT) lines the ATP pocket. Residue 210-330 (DRVLELMPAQ…LIEHRELASE (121 aa)) coordinates a nucleoside 3',5'-cyclic phosphate.

The protein belongs to the ABC transporter superfamily.

This is an uncharacterized protein from Mycobacterium bovis (strain ATCC BAA-935 / AF2122/97).